The primary structure comprises 164 residues: Anterior gradient protein 2-B (164 aa).

Positions 1–20 (MESVLKSLFVLLVATSFTLA) are cleaved as a signal peptide. 2 short sequence motifs (homodimer stabilization; interchain) span residues 34–43 (SRGWGDNLEW) and 49–56 (EGLYKAKA).

This sequence belongs to the AGR family. As to quaternary structure, monomer and homodimer.

It is found in the secreted. The protein localises to the endoplasmic reticulum. In Xenopus laevis (African clawed frog), this protein is Anterior gradient protein 2-B (agr2-b).